We begin with the raw amino-acid sequence, 435 residues long: GTPase Der (435 aa).

EngA-type G domains follow at residues 4–167 (PTLA…PSED) and 175–350 (IKFS…ENQT). Residues 10-17 (GRPNVGKS), 57-61 (DTGGI), 119-122 (NKVD), 181-188 (GRPNVGKS), 228-232 (DTAGI), and 293-296 (NKWD) each bind GTP. Residues 351–435 (RRIQSSVLND…PIHIIARKRK (85 aa)) enclose the KH-like domain.

Belongs to the TRAFAC class TrmE-Era-EngA-EngB-Septin-like GTPase superfamily. EngA (Der) GTPase family. In terms of assembly, associates with the 50S ribosomal subunit.

Its function is as follows. GTPase that plays an essential role in the late steps of ribosome biogenesis. This is GTPase Der from Lacticaseibacillus casei (strain BL23) (Lactobacillus casei).